The sequence spans 400 residues: MWRLIIIAILFQGLVNSAMLERRKRGVDPETAMNISEIILFRGYPSEEYEVVTGDGYILCLNRIPYGKISQKTKEPKPAVFLQHGLLADGSNWVTNLDYNSLGFALADAGFDVWLGNSRGNTWSQKHINYTIKQKEFWMFSFNEMAMYDIPASVNFVLNKTGQEQLFYVGHSQGTTIGFIAFSVLPELAKKIKMFFGLAPVMTVKFSSGGLVKLGELPEFLLKEIFGTKQIFPQNAVIKWLATHVCGQVLIDELCGNFFFLLCGFNEKNLNMSRVEIYSTHCPAGTSVQNMLHWSQAVKSGEVRAFDWGSRKENMAHYKQPTPPPYKMERMLVPTALWTGGHDWLSDRKDIAILLTLIPNLIYHKEIPEWEHLDFIWGLDAPQRMFRDMIQMMHKVQYAH.

Positions 1 to 17 (MWRLIIIAILFQGLVNS) are cleaved as a signal peptide. N-linked (GlcNAc...) asparagine glycans are attached at residues N34, N129, and N159. The AB hydrolase-1 domain occupies 78–378 (PAVFLQHGLL…EWEHLDFIWG (301 aa)). Catalysis depends on S172, which acts as the Charge relay system. A glycan (N-linked (GlcNAc...) asparagine) is linked at N271. Residue H372 is the Charge relay system of the active site.

This sequence belongs to the AB hydrolase superfamily. Lipase family. As to expression, expressed by the venom gland.

The protein resides in the secreted. It carries out the reaction a sterol ester + H2O = a sterol + a fatty acid + H(+). Functionally, in physiological conditions, is crucial for intracellular hydrolysis of cholesteryl esters and triglycerides that have been internalized via receptor-mediated endocytosis of lipoprotein particles. In venom, the biological contribution is unknown. This is Putative lysosomal acid lipase/cholesteryl ester hydrolase from Crotalus adamanteus (Eastern diamondback rattlesnake).